Consider the following 421-residue polypeptide: Truncated surface protein (421 aa).

The N-terminal stretch at 1-31 is a signal peptide; it reads MRAKGTRKNYQHLWRWGTMLLGMLMICSAAE. A disulfide bridge connects residues Cys53 and Cys73. 20 N-linked (GlcNAc...) asparagine; by host glycosylation sites follow: Asn87, Asn97, Asn129, Asn135, Asn140, Asn151, Asn155, Asn183, Asn192, Asn229, Asn236, Asn257, Asn271, Asn284, Asn290, Asn296, Asn326, Asn333, Asn349, and Asn355. 5 disulfide bridges follow: Cys118–Cys200, Cys125–Cys191, Cys130–Cys152, Cys213–Cys242, and Cys223–Cys234. The segment at 130–151 is V1; the sequence is CTDLTNATYANGSSEERGEIRN. The segment at 152–191 is V2; the sequence is CSFNVTTIIRNKIQKEYALFYRLDIVPIDKDNTSYTLINC. The segment at 291 to 324 is V3; sequence CTRPNNNTKKGIAIGPGRTLYAREKIIGDIRQAH. Cys291 and Cys325 are oxidised to a cystine. Positions 357-367 are CD4-binding loop; the sequence is SSGGDPEIVMH. Residues Cys378 and Cys410 are joined by a disulfide bond. Residues 378–410 form a V4 region; it reads CKTTQLFNSTWLFNSTWNDTERSDNNETIIIPC. 4 N-linked (GlcNAc...) asparagine; by host glycosylation sites follow: Asn385, Asn391, Asn395, and Asn403.

The protein localises to the virion membrane. The chain is Truncated surface protein (env) from Human immunodeficiency virus type 1 group M subtype B (isolate NY5) (HIV-1).